The sequence spans 454 residues: Aspartokinase 3 (454 aa).

2 ACT domains span residues 312–388 (ISKY…ALIM) and 389–454 (VVGE…VLIS).

This sequence belongs to the aspartokinase family. As to quaternary structure, monomer.

It catalyses the reaction L-aspartate + ATP = 4-phospho-L-aspartate + ADP. It participates in amino-acid biosynthesis; L-lysine biosynthesis via DAP pathway; (S)-tetrahydrodipicolinate from L-aspartate: step 1/4. It functions in the pathway amino-acid biosynthesis; L-methionine biosynthesis via de novo pathway; L-homoserine from L-aspartate: step 1/3. Its pathway is amino-acid biosynthesis; L-threonine biosynthesis; L-threonine from L-aspartate: step 1/5. In terms of biological role, catalyzes the phosphorylation of the beta-carboxyl group of aspartic acid with ATP to yield 4-phospho-L-aspartate, which is involved in the branched biosynthetic pathway leading to the biosynthesis of amino acids threonine, isoleucine and methionine. The chain is Aspartokinase 3 (yclM) from Bacillus subtilis (strain 168).